Reading from the N-terminus, the 39-residue chain is Potassium channel toxin alpha-KTx 2.23 (39 aa).

3 cysteine pairs are disulfide-bonded: C7–C29, C13–C34, and C17–C36.

As to expression, expressed by the venom gland.

The protein resides in the secreted. In terms of biological role, blocks human voltage-gated potassium (Kv) channels Kv1.1/KCNA1, Kv1.2/KCNA2 and Kv1.3/KCNA3. The sequence is that of Potassium channel toxin alpha-KTx 2.23 from Centruroides bonito (Scorpion).